The primary structure comprises 1714 residues: MSANAAWDDSDSENENVVVEEKPVILPRARQPSIAKSLEKVQILENSVAGSEKNASDDDSDASSVMSDDLESLGETTEVLNFSLEQLSMMKKNLAQFPCSYKNIISEFADVEIFLISIDSLIVECAAHSYHNWDVAGQSMVLNKQIDRFLQQFVDIGGRFKLVVFSDLTTQFAKDTTLSFARSTALAHLANGPHARDLLFFTNPTDPEWDKLLNDLTPSFLMISTDNVTQNVCASQEIDLTKQFETIAFDVLTRSMSVVLLHSIKVNFVSVEAYYIQPLLVVAPDWQAFLAAHWDNNGTLLRNHLSKEIKFNQFETPADLWVKVITDAKATGKGSDTFDTLAAAVILSSLICSRRGAHRIYYPTRTDAKRGLNVIRDRRLILNAAVVLLDKADHANSKLDLSDLWDGRMVYSIFDELSANETVLPYRLQDDFAKYHQKAGLTVPLATDTNEKLFDPIPEITDPLVDLPILYSVTSPMIKRFVPEIEKMTSQNAVEEGTVQDYADYLKDTSQWRLKPIEETYAQKEEKIEDAWQLKKANRSKQFLMRWYELFANSLEGRGSNLLVDFSRVPKGYAVVEEEVTDEKKTGKGGWSGQKQQKPGAGGKKGATKESGKSKKDLILEANKKAKDQKVAESEKVKIKYGCQQGKESVIFLNNLYSSLDLPETRALCVYEIAVREGRTIFDQHQGTDKQEVRRNAAIDLVGHLKDCFVKHWDHLESKQKEQIVDLWVSLGFEAPAGSKPSSEAKQKKLNLGINMVYYQLQYGGELIDIQSDPKKDDRVSGFAPDGWQRKMLDSVDRGNSALIIAPTSAGKTFVSYYCIEKVLRSSDNDVVVYVAPSKALINQVCGSVYARFRNKSMKRGISLFGTLTQEYSQNAMQCQVLITVPECLQELMLSRTPAVQKFVSHIKYVVFDEVHSIGASEESHIWEQLLLLIQCPFLALSATIGNANKLHEWLNSSEQAKSAGKRKVELINYGERYSELELSILNINDPHGEDDGAVHKKAGERAVIPLMPYGVYMPEKLRMFSIPEDQQLTARQVLHLYNMMAEVDDATKKEFEPCKFFGQHGTKAVWISRSELRRLENALKERFMEWLSSDEQKINSILKILKEPVNTQLSYRARPFNKEKIANDYIVTLVDDLKEKGELPAICFNDDRHVCEKLAVTLANELERRELEYMETDEFKNKYMIKDESKLVKLAKRKRDDAEKKKKGDKDEDAGPEKDDDEMDVLAMKKAKLARALERFKLRGRNGGDPDIYAKMVERMQKGAKTRESTQVLLKLFERGIGYHHAGLNTVERGAVEVLFRSGNLAVLFSTSTLSLGVNMPCKTVMFGVDTLQLTPLLYRQMSGRAGRRGFDHSGNVIFMSIPTSKVRRLLTASLSNLQGNPPFTVLFLLRLFAYVHQQDILNEEGQKVSTMKQRAFAAKSLLEHSFSIHTRREAQDGILQKQLRMFSAFSFQLLRHLQLLSPFGEGKNFAEMAIHSSSGANGTLLFIYLMQKKCFHQLIKSYDTAEQAQLGILEVLANLFTNLRMTPFHERSDNLENVQVTLRGLPSLLKPYVEEYNSTVTGLYKRFMAASSQDGNLFDPSFAVSGKLDSESVSLTEDFLVAPLFDQYSHDESFLPVIDFNKKDHRGRKIQRNAFAYDFYVHGSRNMLMDVNGLHVSVAWFLLHDFAAILERLAIGVHNMARPQDPLVLVLEELHKNYDEKFRKAFGMRTRD.

2 disordered regions span residues 47 to 70 (SVAGSEKNASDDDSDASSVMSDDL) and 584 to 616 (KKTGKGGWSGQKQQKPGAGGKKGATKESGKSKK). ATP is bound by residues 607-614 (ATKESGKS) and 806-813 (APTSAGKT). Over residues 607-616 (ATKESGKSKK) the composition is skewed to basic and acidic residues. The Helicase ATP-binding domain occupies 793–963 (LDSVDRGNSA…WLNSSEQAKS (171 aa)). The DEVH box signature appears at 913–916 (DEVH). Residues 1197-1223 (KRKRDDAEKKKKGDKDEDAGPEKDDDE) are disordered. The segment covering 1199–1218 (KRDDAEKKKKGDKDEDAGPE) has biased composition (basic and acidic residues). A Helicase C-terminal domain is found at 1237–1391 (ALERFKLRGR…NPPFTVLFLL (155 aa)).

The protein belongs to the helicase family. SKI2 subfamily.

It is found in the nucleus. This is an uncharacterized protein from Caenorhabditis elegans.